A 199-amino-acid chain; its full sequence is Peroxiredoxin-1 (199 aa).

Residues 6–165 (AYIGKLAPDF…TLRLVQAFQF (160 aa)) form the Thioredoxin domain. The Cysteine sulfenic acid (-SOH) intermediate role is filled by Cys-52.

Belongs to the peroxiredoxin family. AhpC/Prx1 subfamily. As to quaternary structure, homodimer; disulfide-linked, upon oxidation. 5 homodimers assemble to form a ring-like decamer. Interacts with GDPD5; forms a mixed-disulfide with GDPD5. Interacts with SESN1 and SESN2. Interacts with FAM107A. The enzyme can be inactivated by further oxidation of the cysteine sulfenic acid (C(P)-SOH) to sulphinic acid (C(P)-SO2H) instead of its condensation to a disulfide bond. It can be reactivated by forming a transient disulfide bond with sulfiredoxin SRXN1, which reduces the cysteine sulfinic acid in an ATP- and Mg-dependent manner.

It localises to the cytoplasm. It catalyses the reaction a hydroperoxide + [thioredoxin]-dithiol = an alcohol + [thioredoxin]-disulfide + H2O. In terms of biological role, thiol-specific peroxidase that catalyzes the reduction of hydrogen peroxide and organic hydroperoxides to water and alcohols, respectively. Plays a role in cell protection against oxidative stress by detoxifying peroxides and as sensor of hydrogen peroxide-mediated signaling events. Might participate in the signaling cascades of growth factors and tumor necrosis factor-alpha by regulating the intracellular concentrations of H(2)O(2). Reduces an intramolecular disulfide bond in GDPD5 that gates the ability to GDPD5 to drive postmitotic motor neuron differentiation. The sequence is that of Peroxiredoxin-1 (PRDX1) from Gekko japonicus (Schlegel's Japanese gecko).